The following is a 91-amino-acid chain: Acyl-CoA-binding domain-containing protein 1 (91 aa).

An ACB domain is found at 3-88; that stretch reads LQEDFEQYAE…VKQLLEEAAA (86 aa). Residues Lys15, 30-34, Lys56, and Tyr75 each bind an acyl-CoA; that span reads YGLYK.

Belongs to the ACBP family. Highly expressed in leaves. Expressed at low levels in roots and seeds.

The protein localises to the cytoplasm. The protein resides in the cytosol. In terms of biological role, binds medium- and long-chain acyl-CoA esters with high affinity. Can interact in vitro with palmitoyl-CoA, oleoyl-CoA, linoleoyl-CoA and linolenoyl-CoA. Binds phosphatidic acid (PA) and phosphatidylcholine (PC) in vitro. May play a role in the biosynthesis of phospholipids. The chain is Acyl-CoA-binding domain-containing protein 1 from Oryza sativa subsp. japonica (Rice).